The chain runs to 301 residues: Heat shock factor protein HSF24 (301 aa).

The DNA-binding element occupies 7 to 101 (PAPFLLKTYQ…LLTAIRRRKT (95 aa)). 2 disordered regions span residues 103 to 160 (TSTP…DENE) and 221 to 244 (GVKD…DEKG). The span at 107 to 142 (AGGKSVAAGASASPDNSGDDIGSSSTSSPDSKNPGS) shows a compositional bias: low complexity. The span at 233–243 (DNDDKEDDDEK) shows a compositional bias: acidic residues.

This sequence belongs to the HSF family. Homotrimer. In terms of processing, exhibits temperature-dependent phosphorylation.

The protein localises to the nucleus. Its function is as follows. DNA-binding protein that specifically binds heat shock promoter elements (HSE) and activates transcription. The sequence is that of Heat shock factor protein HSF24 (HSF24) from Solanum peruvianum (Peruvian tomato).